A 427-amino-acid chain; its full sequence is Acetylornithine aminotransferase (427 aa).

The tract at residues 1–23 (MSLQTLIEQATNPPESGSAASSP) is disordered. Pyridoxal 5'-phosphate-binding positions include 124–125 (GA) and Phe157. Residue Arg160 participates in N(2)-acetyl-L-ornithine binding. 248-251 (DEVQ) lines the pyridoxal 5'-phosphate pocket. Lys277 is modified (N6-(pyridoxal phosphate)lysine). Ser304 contacts N(2)-acetyl-L-ornithine. Thr305 lines the pyridoxal 5'-phosphate pocket.

The protein belongs to the class-III pyridoxal-phosphate-dependent aminotransferase family. ArgD subfamily. In terms of assembly, homodimer. It depends on pyridoxal 5'-phosphate as a cofactor.

It localises to the cytoplasm. The enzyme catalyses N(2)-acetyl-L-ornithine + 2-oxoglutarate = N-acetyl-L-glutamate 5-semialdehyde + L-glutamate. It functions in the pathway amino-acid biosynthesis; L-arginine biosynthesis; N(2)-acetyl-L-ornithine from L-glutamate: step 4/4. The protein is Acetylornithine aminotransferase of Nostoc sp. (strain PCC 7120 / SAG 25.82 / UTEX 2576).